We begin with the raw amino-acid sequence, 218 residues long: Cytochrome c biogenesis ATP-binding export protein CcmA (218 aa).

Residues 2–217 (LEAKNLTCIR…KSCLSACCAV (216 aa)) form the ABC transporter domain. Residue 34 to 41 (GPNGAGKT) participates in ATP binding.

This sequence belongs to the ABC transporter superfamily. CcmA exporter (TC 3.A.1.107) family. In terms of assembly, the complex is composed of two ATP-binding proteins (CcmA) and two transmembrane proteins (CcmB).

It is found in the cell inner membrane. The catalysed reaction is heme b(in) + ATP + H2O = heme b(out) + ADP + phosphate + H(+). Functionally, part of the ABC transporter complex CcmAB involved in the biogenesis of c-type cytochromes; once thought to export heme, this seems not to be the case, but its exact role is uncertain. Responsible for energy coupling to the transport system. The protein is Cytochrome c biogenesis ATP-binding export protein CcmA of Yersinia pseudotuberculosis serotype I (strain IP32953).